The chain runs to 936 residues: MutS protein homolog 4 (936 aa).

Disordered stretches follow at residues 1-83 (MLRP…AQGS) and 103-133 (GASS…SGYK). The segment covering 7–20 (SSTSPSAPAVSPSS) has biased composition (low complexity). Polar residues predominate over residues 35–55 (LQETPQSRPSVQVVSASTCPG). 680 to 687 (GPNMSGKS) lines the ATP pocket.

It belongs to the DNA mismatch repair MutS family. As to quaternary structure, heterooligomer of MSH4 and MSH5. As to expression, highly expressed in testis. Also expressed in the ovary.

It is found in the chromosome. In terms of biological role, involved in meiotic recombination. Required for reciprocal recombination and proper segregation of homologous chromosomes at meiosis. In Homo sapiens (Human), this protein is MutS protein homolog 4 (MSH4).